A 398-amino-acid chain; its full sequence is tRNA-specific 2-thiouridylase MnmA (398 aa).

ATP-binding positions include 19–26 (AMSGGVDS) and L45. Residue C113 is the Nucleophile of the active site. A disulfide bridge links C113 with C210. G137 is a binding site for ATP. The segment at 160 to 162 (RDQ) is interaction with tRNA. C210 (cysteine persulfide intermediate) is an active-site residue.

This sequence belongs to the MnmA/TRMU family.

Its subcellular location is the cytoplasm. It catalyses the reaction S-sulfanyl-L-cysteinyl-[protein] + uridine(34) in tRNA + AH2 + ATP = 2-thiouridine(34) in tRNA + L-cysteinyl-[protein] + A + AMP + diphosphate + H(+). Functionally, catalyzes the 2-thiolation of uridine at the wobble position (U34) of tRNA, leading to the formation of s(2)U34. This Rhodopseudomonas palustris (strain BisB5) protein is tRNA-specific 2-thiouridylase MnmA.